The primary structure comprises 203 residues: Thymidine kinase (203 aa).

ATP-binding positions include 9-16 (ATMNAGKT) and 87-90 (DEAQ). Glu88 (proton acceptor) is an active-site residue. Zn(2+) contacts are provided by Cys145, Cys147, Cys181, and His184.

The protein belongs to the thymidine kinase family. Homotetramer.

It localises to the cytoplasm. The enzyme catalyses thymidine + ATP = dTMP + ADP + H(+). The sequence is that of Thymidine kinase from Mesorhizobium japonicum (strain LMG 29417 / CECT 9101 / MAFF 303099) (Mesorhizobium loti (strain MAFF 303099)).